A 377-amino-acid chain; its full sequence is MNKVLIIGSGFSGATIARLLAEENIKVKIIDDRKHIGGNCYDERDEKTGINVHVYGPHIFHTDNEDVWNFVNKYGTFQPYTTRLKANAKGQIYSLPVNLHTINQYYKTALSPTEARKLIASKGDQTINDPQSFEEQALKFVGEDLYKTFFYGYPKKQWGMEPKEIPASVLKRLPVRFNYDDNYFFHKFQGIPRDGYTPLFQNLLNHPNIEFELGKKVNRATVEELITSEQYGHVFFSGAIDHFYDYEFGMLQYRTLDFEKFYSEDDDYQGCVVMSYCDEDVPYTRVTEHKYFTPWEEHKGSVLYKEFSRSCDKEDIPYYPVRLVSGNSIWNKYEQKAKEETNITFIGRLATYRYLDMDVCIKEAIECAQLYIKNNKE.

Residues serine 12, 31–32 (DD), asparagine 39, 58–59 (HI), arginine 348, and 355–360 (LDMDVC) contribute to the FAD site.

The protein belongs to the UDP-galactopyranose/dTDP-fucopyranose mutase family. FAD is required as a cofactor.

It catalyses the reaction dTDP-alpha-D-fucose = dTDP-alpha-D-fucofuranose. It participates in bacterial outer membrane biogenesis; LPS O-antigen biosynthesis. Inhibited by Cu(2+), while other divalent cations such as Ca(2+), Co(2+), Fe(2+) and Mg(2+) have no obvious effects on enzyme activity. Its function is as follows. Catalyzes the conversion of dTDP-alpha-D-fucopyranose to dTDP-alpha-D-fucofuranose. This is a step in the biosynthesis of D-fucofuranose, a component of E.coli O52 O antigen. The sequence is that of dTDP-fucopyranose mutase (fcf2) from Escherichia coli.